The primary structure comprises 835 residues: Translation initiation factor IF-2 (835 aa).

Positions 1–243 (MSDTDGKKTL…RARQKAMGGA (243 aa)) are disordered. The span at 43–67 (VPKPGAGKPSAGGSSPAGDPSRRPA) shows a compositional bias: low complexity. 3 stretches are compositionally biased toward basic and acidic residues: residues 85-147 (KARE…EAKR), 157-166 (EAPKAERSAE), and 175-205 (EGGD…DGRR). In terms of domain architecture, tr-type G spans 332–500 (PRPPVITIMG…AIALQAEILE (169 aa)). The interval 341–348 (GHVDHGKT) is G1. A GTP-binding site is contributed by 341 to 348 (GHVDHGKT). The segment at 366 to 370 (GITQH) is G2. The interval 388 to 391 (DTPG) is G3. Residues 388 to 392 (DTPGH) and 442 to 445 (NKID) each bind GTP. Residues 442–445 (NKID) are G4. Residues 478-480 (SAK) form a G5 region.

The protein belongs to the TRAFAC class translation factor GTPase superfamily. Classic translation factor GTPase family. IF-2 subfamily.

Its subcellular location is the cytoplasm. Functionally, one of the essential components for the initiation of protein synthesis. Protects formylmethionyl-tRNA from spontaneous hydrolysis and promotes its binding to the 30S ribosomal subunits. Also involved in the hydrolysis of GTP during the formation of the 70S ribosomal complex. The sequence is that of Translation initiation factor IF-2 from Ruegeria pomeroyi (strain ATCC 700808 / DSM 15171 / DSS-3) (Silicibacter pomeroyi).